The sequence spans 368 residues: Flap endonuclease 1 (368 aa).

The tract at residues 1 to 104 (MGIHDLSKVI…GELLKRGARR (104 aa)) is N-domain. Position 34 (Asp34) interacts with Mg(2+). Residues Arg47 and Arg70 each coordinate DNA. Residue Asp86 participates in Mg(2+) binding. The segment at 103-123 (RRKEAQANLEEATEQGDTEQM) is disordered. The I-domain stretch occupies residues 122 to 251 (QMEKFSRRLV…QKAYQLIKEH (130 aa)). Residues Glu158, Glu160, Asp179, and Asp181 each coordinate Mg(2+). Glu158 provides a ligand contact to DNA. Residues Gly229 and Asp231 each coordinate DNA. Asp231 provides a ligand contact to Mg(2+). The interaction with PCNA stretch occupies residues 334-342 (QQGRLDSFF).

It belongs to the XPG/RAD2 endonuclease family. FEN1 subfamily. As to quaternary structure, interacts with PCNA. Three molecules of FEN1 bind to one PCNA trimer with each molecule binding to one PCNA monomer. PCNA stimulates the nuclease activity without altering cleavage specificity. The cofactor is Mg(2+). Post-translationally, phosphorylated. Phosphorylation upon DNA damage induces relocalization to the nuclear plasma.

Its subcellular location is the nucleus. The protein localises to the nucleolus. It localises to the nucleoplasm. It is found in the mitochondrion. In terms of biological role, structure-specific nuclease with 5'-flap endonuclease and 5'-3' exonuclease activities involved in DNA replication and repair. During DNA replication, cleaves the 5'-overhanging flap structure that is generated by displacement synthesis when DNA polymerase encounters the 5'-end of a downstream Okazaki fragment. It enters the flap from the 5'-end and then tracks to cleave the flap base, leaving a nick for ligation. Also involved in the long patch base excision repair (LP-BER) pathway, by cleaving within the apurinic/apyrimidinic (AP) site-terminated flap. Acts as a genome stabilization factor that prevents flaps from equilibrating into structures that lead to duplications and deletions. Also possesses 5'-3' exonuclease activity on nicked or gapped double-stranded DNA, and exhibits RNase H activity. Also involved in replication and repair of rDNA and in repairing mitochondrial DNA. In Monosiga brevicollis (Choanoflagellate), this protein is Flap endonuclease 1.